We begin with the raw amino-acid sequence, 66 residues long: Small ribosomal subunit protein bS21A (66 aa).

Over residues 34–46 (KHYEKPSVKKKRK) the composition is skewed to basic residues. Positions 34 to 66 (KHYEKPSVKKKRKQMEAERKRRKAQRFRKPDRD) are disordered.

Belongs to the bacterial ribosomal protein bS21 family.

This Geobacter sulfurreducens (strain ATCC 51573 / DSM 12127 / PCA) protein is Small ribosomal subunit protein bS21A.